Consider the following 207-residue polypeptide: Histone H1-like protein HC2 (207 aa).

Composition is skewed to basic residues over residues 1-50 (MLGV…KTVA) and 59-72 (PAAK…APVR). The interval 1–72 (MLGVQKKRST…KTAAKKAPVR (72 aa)) is disordered. Tandem repeats lie at residues 35-58 (VRKV…AARK), 71-94 (VRKV…AARK), and 113-136 (VRKV…AARK). Residues 35–136 (VRKVAAKKTV…VAKKAVAARK (102 aa)) are 3 X 24 AA repeats of V-R-K-V-A-A-K-K-T-V-A-R-K-T-V-A-K-K-A-V-A-A-R-K.

It belongs to the histone H1/H5 family. HCT subfamily.

Functionally, might have a role in establishing the nucleoid structure of elementary bodies. In Chlamydia muridarum (strain MoPn / Nigg), this protein is Histone H1-like protein HC2 (hctB).